Consider the following 201-residue polypeptide: ATP-dependent Clp protease proteolytic subunit (201 aa).

Serine 101 acts as the Nucleophile in catalysis. Histidine 126 is an active-site residue.

This sequence belongs to the peptidase S14 family. As to quaternary structure, component of the chloroplastic Clp protease core complex.

The protein localises to the plastid. It localises to the chloroplast stroma. It carries out the reaction Hydrolysis of proteins to small peptides in the presence of ATP and magnesium. alpha-casein is the usual test substrate. In the absence of ATP, only oligopeptides shorter than five residues are hydrolyzed (such as succinyl-Leu-Tyr-|-NHMec, and Leu-Tyr-Leu-|-Tyr-Trp, in which cleavage of the -Tyr-|-Leu- and -Tyr-|-Trp bonds also occurs).. Its function is as follows. Cleaves peptides in various proteins in a process that requires ATP hydrolysis. Has a chymotrypsin-like activity. Plays a major role in the degradation of misfolded proteins. This Staurastrum punctulatum (Green alga) protein is ATP-dependent Clp protease proteolytic subunit.